We begin with the raw amino-acid sequence, 536 residues long: Putative UDP-glucuronosyltransferase ugt-47 (536 aa).

An N-terminal signal peptide occupies residues 1–21; the sequence is MMLQTSTILQLLLFLVGSVSA. N-linked (GlcNAc...) asparagine glycosylation is found at Asn52 and Asn308. Residues 497–517 form a helical membrane-spanning segment; that stretch reads IIVPVLFVLLYCLIIPFFKLI.

It belongs to the UDP-glycosyltransferase family.

The protein resides in the membrane. The catalysed reaction is glucuronate acceptor + UDP-alpha-D-glucuronate = acceptor beta-D-glucuronoside + UDP + H(+). The sequence is that of Putative UDP-glucuronosyltransferase ugt-47 (ugt-47) from Caenorhabditis briggsae.